The following is a 289-amino-acid chain: Cell division protein ZipA (289 aa).

Residue Met1 is a topological domain, periplasmic. The helical transmembrane segment at Glu2–Phe22 threads the bilayer. The Cytoplasmic portion of the chain corresponds to Asp23–Gly289. Residues Asp48–Lys141 form a disordered region. Composition is skewed to basic and acidic residues over residues Leu64–Leu77, Arg85–Pro106, and Gly123–Lys141.

The protein belongs to the ZipA family. As to quaternary structure, interacts with FtsZ via their C-terminal domains.

The protein localises to the cell inner membrane. Its function is as follows. Essential cell division protein that stabilizes the FtsZ protofilaments by cross-linking them and that serves as a cytoplasmic membrane anchor for the Z ring. Also required for the recruitment to the septal ring of downstream cell division proteins. In Pseudomonas savastanoi pv. phaseolicola (strain 1448A / Race 6) (Pseudomonas syringae pv. phaseolicola (strain 1448A / Race 6)), this protein is Cell division protein ZipA.